A 272-amino-acid chain; its full sequence is Ribonuclease HII (272 aa).

An RNase H type-2 domain is found at 87 to 272 (KYVAGVDEVG…HRMSFLKNIL (186 aa)). Positions 93, 94, and 188 each coordinate a divalent metal cation.

The protein belongs to the RNase HII family. The cofactor is Mn(2+). Mg(2+) serves as cofactor.

It localises to the cytoplasm. It carries out the reaction Endonucleolytic cleavage to 5'-phosphomonoester.. Its function is as follows. Endonuclease that specifically degrades the RNA of RNA-DNA hybrids. In Clostridium perfringens (strain 13 / Type A), this protein is Ribonuclease HII.